We begin with the raw amino-acid sequence, 66 residues long: DNA gyrase inhibitor YacG (66 aa).

Cys9, Cys12, Cys28, and Cys32 together coordinate Zn(2+). The tract at residues 45–66 (HKIAGSQESEDELYSGDLEPRH) is disordered.

This sequence belongs to the DNA gyrase inhibitor YacG family. In terms of assembly, interacts with GyrB. Zn(2+) is required as a cofactor.

Inhibits all the catalytic activities of DNA gyrase by preventing its interaction with DNA. Acts by binding directly to the C-terminal domain of GyrB, which probably disrupts DNA binding by the gyrase. In Pseudomonas putida (strain W619), this protein is DNA gyrase inhibitor YacG.